We begin with the raw amino-acid sequence, 701 residues long: Probable cytosolic oligopeptidase A (701 aa).

Ala2 is subject to N-acetylalanine. Residues 148 to 194 (IALEDDKREEFNKIEQELEKLSHKFSENVLDATKKFEKLITDKKEIE) adopt a coiled-coil conformation. His483 is a Zn(2+) binding site. Glu484 is a catalytic residue. The Zn(2+) site is built by His487 and Glu513. Residue 615–621 (HIFAGGY) coordinates substrate.

It belongs to the peptidase M3 family. It depends on Zn(2+) as a cofactor.

It is found in the cytoplasm. The protein localises to the cytosol. The enzyme catalyses Hydrolysis of oligopeptides, with broad specificity. Gly or Ala commonly occur as P1 or P1' residues, but more distant residues are also important, as is shown by the fact that Z-Gly-Pro-Gly-|-Gly-Pro-Ala is cleaved, but not Z-(Gly)(5).. Its activity is regulated as follows. Inhibited by salicylic acid. Functionally, oligopeptidase that may be involved in the degradation of proteasome-generated peptides. Binds salicylic acid. In Arabidopsis thaliana (Mouse-ear cress), this protein is Probable cytosolic oligopeptidase A.